The primary structure comprises 166 residues: Photosystem I assembly protein Ycf3 (166 aa).

3 TPR repeats span residues 31-64 (AFKY…EEDP), 68-101 (SYIL…NPNL), and 116-149 (GEQA…APNN).

It belongs to the Ycf3 family.

The protein resides in the cellular thylakoid membrane. Its function is as follows. Essential for the assembly of the photosystem I (PSI) complex. May act as a chaperone-like factor to guide the assembly of the PSI subunits. The sequence is that of Photosystem I assembly protein Ycf3 from Acaryochloris marina (strain MBIC 11017).